The following is an 86-amino-acid chain: Small ribosomal subunit protein uS15c (86 aa).

The protein belongs to the universal ribosomal protein uS15 family. In terms of assembly, part of the 30S ribosomal subunit.

Its subcellular location is the plastid. This Cuscuta gronovii (Common dodder) protein is Small ribosomal subunit protein uS15c (rps15).